A 648-amino-acid polypeptide reads, in one-letter code: Actin-related protein 5 (648 aa).

The disordered stretch occupies residues 34–59 (LTKPRKDRKKEAAASEGSASQTTVEQ). 2 coiled-coil regions span residues 277–311 (TAEQ…EQQL) and 340–364 (TLED…RAQS). Disordered stretches follow at residues 357 to 385 (RAQE…PEGM) and 403 to 455 (GRKQ…GMND). Positions 414-428 (EQAKRHTHAAQERMR) are enriched in basic and acidic residues. Ser-471 and Ser-473 each carry phosphoserine.

The protein belongs to the actin family. ARP5 subfamily. Component of the chromatin remodeling Ino80 complex.

Its subcellular location is the nucleus. Proposed core component of the chromatin remodeling Ino80 complex which is involved in transcriptional regulation, DNA replication and probably DNA repair. The chain is Actin-related protein 5 from Drosophila melanogaster (Fruit fly).